Reading from the N-terminus, the 285-residue chain is Acetyl-coenzyme A carboxylase carboxyl transferase subunit beta (285 aa).

A CoA carboxyltransferase N-terminal domain is found at 24–285 (GLWYKSPTGK…DLIQNQPVRA (262 aa)).

This sequence belongs to the AccD/PCCB family. In terms of assembly, acetyl-CoA carboxylase is a heterohexamer composed of biotin carboxyl carrier protein (AccB), biotin carboxylase (AccC) and two subunits each of ACCase subunit alpha (AccA) and ACCase subunit beta (AccD).

The protein localises to the cytoplasm. The catalysed reaction is N(6)-carboxybiotinyl-L-lysyl-[protein] + acetyl-CoA = N(6)-biotinyl-L-lysyl-[protein] + malonyl-CoA. It participates in lipid metabolism; malonyl-CoA biosynthesis; malonyl-CoA from acetyl-CoA: step 1/1. Component of the acetyl coenzyme A carboxylase (ACC) complex. Biotin carboxylase (BC) catalyzes the carboxylation of biotin on its carrier protein (BCCP) and then the CO(2) group is transferred by the transcarboxylase to acetyl-CoA to form malonyl-CoA. The sequence is that of Acetyl-coenzyme A carboxylase carboxyl transferase subunit beta from Christiangramia forsetii (strain DSM 17595 / CGMCC 1.15422 / KT0803) (Gramella forsetii).